The following is a 302-amino-acid chain: Snake venom metalloprotease inhibitor 02A10 (302 aa).

An N-terminal signal peptide occupies residues 1–23; the sequence is MSVSRLAASGLLLVSLLALALDG. A propeptide spanning residues 24–47 is cleaved from the precursor; the sequence is KPVEKWSPWLWPPRPRPPIPPLQQ. Residues 32–302 are disordered; it reads WLWPPRPRPP…CPKLPPSGGH (271 aa). A compositionally biased stretch (pro residues) spans 33–44; sequence LWPPRPRPPIPP. A Pyrrolidone carboxylic acid modification is found at Q48. Residues 51–58 constitute a propeptide that is removed on maturation; the sequence is LDPPIPQQ. At Q59 the chain carries Pyrrolidone carboxylic acid. A propeptide spanning residues 62–69 is cleaved from the precursor; the sequence is LDPPIPQQ. Q70 is modified (pyrrolidone carboxylic acid). Residues 73–80 constitute a propeptide that is removed on maturation; the sequence is LDPPIPQQ. The residue at position 81 (Q81) is a Pyrrolidone carboxylic acid. A propeptide spanning residues 84-91 is cleaved from the precursor; that stretch reads LNPPIPQQ. Q92 is modified (pyrrolidone carboxylic acid). Positions 95–102 are excised as a propeptide; sequence LDPPIPQQ. A Pyrrolidone carboxylic acid modification is found at Q103. Residues 106-113 constitute a propeptide that is removed on maturation; the sequence is LNPPIPQQ. Q114 bears the Pyrrolidone carboxylic acid mark. Residues 117–124 constitute a propeptide that is removed on maturation; the sequence is LNPPIPQQ. Q125 is modified (pyrrolidone carboxylic acid). A propeptide spanning residues 128–135 is cleaved from the precursor; sequence LNPPIPQQ. Pyrrolidone carboxylic acid is present on Q136. The propeptide occupies 139 to 146; sequence LNPPIPQQ. Q147 carries the post-translational modification Pyrrolidone carboxylic acid. A propeptide spanning residues 150–157 is cleaved from the precursor; that stretch reads LDPPIPQQ. Position 158 is a pyrrolidone carboxylic acid (Q158). The propeptide occupies 161 to 168; it reads LDPPIPQQ. The residue at position 169 (Q169) is a Pyrrolidone carboxylic acid. A propeptide spanning residues 172-179 is cleaved from the precursor; the sequence is LDPPIPQQ. At Q180 the chain carries Pyrrolidone carboxylic acid. Residues 183-190 constitute a propeptide that is removed on maturation; sequence LNPPIPQQ. A Pyrrolidone carboxylic acid modification is found at Q191. The propeptide occupies 194-201; the sequence is LDPPIPQQ. Q202 bears the Pyrrolidone carboxylic acid mark. The propeptide occupies 205–212; it reads LDPPIPQQ. A Pyrrolidone carboxylic acid modification is found at Q213. A propeptide spanning residues 216–223 is cleaved from the precursor; that stretch reads LNPPIPQQ. Q224 bears the Pyrrolidone carboxylic acid mark. Positions 227–273 are excised as a propeptide; sequence QRPLQPEVPSLMELHQERQKQGRMMHHDEDPGDAAEGPRRQKKEPGK. 2 stretches are compositionally biased toward basic and acidic residues: residues 240 to 255 and 262 to 273; these read LHQERQKQGRMMHHDE and EGPRRQKKEPGK. C279 and C293 are disulfide-bonded. A propeptide spanning residues 294–302 is cleaved from the precursor; the sequence is PKLPPSGGH.

In the C-terminal section; belongs to the natriuretic peptide family. Expressed by the venom gland.

Its subcellular location is the secreted. Its function is as follows. pEKW peptides may serve as metalloproteinase inhibitors during glandular storage. Their inhibition may be instantly disengaged, by dilution or physiochemical change, when venom is injected into tissue of the victim. Exhibits hypotensive and vasodepressor activity. Acts by activating natriuretic receptors (NPR1 and/or NPR2 and/or NPR3). The polypeptide is Snake venom metalloprotease inhibitor 02A10 (Svmpi-Cce12) (Cerastes cerastes (Horned desert viper)).